The primary structure comprises 85 residues: Arminin 2b (85 aa).

A signal peptide spans 1-18; it reads MKTVFAILFLAFIALTYA. A propeptide spanning residues 19–57 is cleaved from the precursor; sequence RSYEDVKEEIKNEIEKEILEDLEEESDELNDKSKEINDA. An Alanine amide modification is found at Ala82.

Belongs to the arminin family. As to expression, expressed in entodermal epithelium along the body column.

The protein resides in the secreted. It localises to the target cell membrane. In terms of biological role, antimicrobial peptide with a broad-spectrum antimicrobial activity. Keeps its antibacterial activity under a wide range of salt concentrations that mimic physiological conditions of human blood, which is surprising, since Hydra is an obligate freshwater animal with nearly no salt tolerance. Does not affect red blood cells. The protein is Arminin 2b of Hydra vulgaris (Hydra).